Consider the following 332-residue polypeptide: uncharacterized protein (332 aa).

A signal peptide spans 1–23 (MKRIPSLIIGLLLILATWHSVLA). Residues 231 to 251 (SFFLGMIVTLIILAPVILYLW) form a helical membrane-spanning segment.

It is found in the membrane. This is an uncharacterized protein from Pyrococcus horikoshii (strain ATCC 700860 / DSM 12428 / JCM 9974 / NBRC 100139 / OT-3).